The primary structure comprises 440 residues: Putative purine permease YwdJ (440 aa).

The next 13 helical transmembrane spans lie at 3 to 23 (LVLG…VVPV), 39 to 59 (LIQS…LKGH), 67 to 87 (PAGL…TVFA), 96 to 116 (LQGA…FKVI), 130 to 150 (VYLL…ILGI), 156 to 176 (GVDG…FIMT), 188 to 208 (ILLA…AKPI), 231 to 251 (GLII…LASM), 283 to 303 (LLSG…AGFI), 314 to 334 (FMLG…MNTF), 341 to 361 (VGFA…FAEF), 374 to 394 (SIIG…ETAL), and 399 to 419 (PVFI…AIAA).

The protein belongs to the nucleobase:cation symporter-2 (NCS2) (TC 2.A.40) family.

Its subcellular location is the cell membrane. This chain is Putative purine permease YwdJ (ywdJ), found in Bacillus subtilis (strain 168).